We begin with the raw amino-acid sequence, 514 residues long: Cytochrome P450 monooxygenase aneD (514 aa).

The chain crosses the membrane as a helical span at residues isoleucine 6 to isoleucine 26. N-linked (GlcNAc...) asparagine glycosylation is found at asparagine 113, asparagine 261, and asparagine 347. A heme-binding site is contributed by cysteine 424.

The protein belongs to the cytochrome P450 family. Heme is required as a cofactor.

It is found in the membrane. The catalysed reaction is asperaculane D + reduced [NADPH--hemoprotein reductase] + O2 = asperaculane E + oxidized [NADPH--hemoprotein reductase] + H2O + H(+). The protein operates within secondary metabolite biosynthesis. Cytochrome P450 monooxygenase; part of the gene cluster that mediates the biosynthesis of aculenes, a unique type of norsesquiterpenes that contain a nordaucane skeleton linked to an L-proline moiety and are of mixed biosynthetic origin. The pathway begins with the synthesis of dauca-4,7-diene by the terpene cyclase aneC using farnesyl pyrophosphate (FPP) as substrate. The cytochrome P450 monooxygenase aneF then performs the initial oxidation at C-12 of dauca-4,7-diene to yield asperaculane D. Asperaculane D is substrate of the cytochrome P450 monooxygenase aneD for C-10 hydroxylation to yield asperaculane E. The cytochrome P450 monooxygenase aneG then converts asperaculane E into aculene D via C-2 oxidation. The monomodular nonribosomal peptide synthtase aneB adenylates L-proline and the thiohydrolase aneE transfers this activated L-proline derivative to aculenes D and C to produce respectively aculenes B and A. The dioxygenase aneA converts aculene D into aculene C, and aculene B into aculene A by introducing the 5,6-alkene moiety. Asperculanes A, B, C and F, as well as 14-prolyl asperculane C, might be shunt products of the pathway. The polypeptide is Cytochrome P450 monooxygenase aneD (Aspergillus aculeatus (strain ATCC 16872 / CBS 172.66 / WB 5094)).